The following is a 712-amino-acid chain: Amino-acid acetyltransferase, mitochondrial (712 aa).

The N-terminal 47 residues, 1–47, are a transit peptide targeting the mitochondrion; sequence MFVRTCRSSCNAWTNATSTTQAGSLLPPNAHRSVVLTLSLQACSART. Residues 55 to 99 form a disordered region; that stretch reads FASTTSQSKRQEAEAEEKRQVSPRLGPSAPRSSYPSSAEARQKRD. Residues 63–74 show a composition bias toward basic and acidic residues; the sequence is KRQEAEAEEKRQ. Residues 81–93 show a composition bias toward low complexity; it reads PSAPRSSYPSSAE. An N-acetyltransferase domain is found at 534-702; that stretch reads GVPRLRLTDT…YEDVCRNIAP (169 aa).

It belongs to the acetyltransferase family.

It is found in the mitochondrion. It catalyses the reaction L-glutamate + acetyl-CoA = N-acetyl-L-glutamate + CoA + H(+). Its pathway is amino-acid biosynthesis; L-arginine biosynthesis; N(2)-acetyl-L-ornithine from L-glutamate: step 1/4. Its activity is regulated as follows. Inhibited by arginine. N-acetylglutamate synthase involved in arginine biosynthesis. The chain is Amino-acid acetyltransferase, mitochondrial (arg-14) from Neurospora crassa (strain ATCC 24698 / 74-OR23-1A / CBS 708.71 / DSM 1257 / FGSC 987).